The following is a 171-amino-acid chain: Actin-related protein 2/3 complex subunit 4 (171 aa).

This sequence belongs to the ARPC4 family. In terms of assembly, component of the Arp2/3 complex composed of ARP2, ARP3, ARC40/p41-ARC, ARC35/p34-ARC, ARC18/p21-ARC, ARC19/p20-ARC and ARC16/p16-ARC.

The protein localises to the cytoplasm. The protein resides in the cytoskeleton. It is found in the actin patch. Its function is as follows. Functions as actin-binding component of the Arp2/3 complex which is involved in regulation of actin polymerization and together with an activating nucleation-promoting factor (NPF) mediates the formation of branched actin networks. Seems to contact the mother actin filament. The protein is Actin-related protein 2/3 complex subunit 4 (ARC19) of Saccharomyces cerevisiae (strain ATCC 204508 / S288c) (Baker's yeast).